A 375-amino-acid polypeptide reads, in one-letter code: 23S rRNA (uracil(747)-C(5))-methyltransferase RlmC (375 aa).

[4Fe-4S] cluster is bound by residues cysteine 3, cysteine 11, cysteine 14, and cysteine 87. The S-adenosyl-L-methionine site is built by glutamine 212, phenylalanine 241, glutamate 262, and asparagine 307. Cysteine 334 functions as the Nucleophile in the catalytic mechanism.

It belongs to the class I-like SAM-binding methyltransferase superfamily. RNA M5U methyltransferase family. RlmC subfamily.

The enzyme catalyses uridine(747) in 23S rRNA + S-adenosyl-L-methionine = 5-methyluridine(747) in 23S rRNA + S-adenosyl-L-homocysteine + H(+). Functionally, catalyzes the formation of 5-methyl-uridine at position 747 (m5U747) in 23S rRNA. This is 23S rRNA (uracil(747)-C(5))-methyltransferase RlmC from Salmonella typhi.